The following is a 426-amino-acid chain: Glutamate-1-semialdehyde 2,1-aminomutase (426 aa).

Lysine 265 is modified (N6-(pyridoxal phosphate)lysine).

It belongs to the class-III pyridoxal-phosphate-dependent aminotransferase family. HemL subfamily. As to quaternary structure, homodimer. It depends on pyridoxal 5'-phosphate as a cofactor.

Its subcellular location is the cytoplasm. The catalysed reaction is (S)-4-amino-5-oxopentanoate = 5-aminolevulinate. It functions in the pathway porphyrin-containing compound metabolism; protoporphyrin-IX biosynthesis; 5-aminolevulinate from L-glutamyl-tRNA(Glu): step 2/2. The sequence is that of Glutamate-1-semialdehyde 2,1-aminomutase from Klebsiella pneumoniae subsp. pneumoniae (strain ATCC 700721 / MGH 78578).